The sequence spans 122 residues: Large ribosomal subunit protein uL14 (122 aa).

This sequence belongs to the universal ribosomal protein uL14 family. As to quaternary structure, part of the 50S ribosomal subunit. Forms a cluster with proteins L3 and L19. In the 70S ribosome, L14 and L19 interact and together make contacts with the 16S rRNA in bridges B5 and B8.

In terms of biological role, binds to 23S rRNA. Forms part of two intersubunit bridges in the 70S ribosome. The sequence is that of Large ribosomal subunit protein uL14 from Shewanella halifaxensis (strain HAW-EB4).